We begin with the raw amino-acid sequence, 77 residues long: Large ribosomal subunit protein uL24 (77 aa).

It belongs to the universal ribosomal protein uL24 family. As to quaternary structure, part of the 50S ribosomal subunit.

Its function is as follows. One of two assembly initiator proteins, it binds directly to the 5'-end of the 23S rRNA, where it nucleates assembly of the 50S subunit. In terms of biological role, one of the proteins that surrounds the polypeptide exit tunnel on the outside of the subunit. The chain is Large ribosomal subunit protein uL24 from Campylobacter jejuni subsp. doylei (strain ATCC BAA-1458 / RM4099 / 269.97).